The primary structure comprises 1036 residues: Nitrogen catabolic enzyme regulatory protein (1036 aa).

Residues 1–17 are compositionally biased toward low complexity; it reads MAASTTTPTATTRPFFT. Disordered regions lie at residues 1 to 126, 207 to 240, 256 to 298, 318 to 351, 590 to 743, 792 to 976, and 1000 to 1028; these read MAAS…HTQS, TDRT…SQGS, TPAG…QSQH, GYLP…HVSA, SSQG…PTTC, RGSG…PTTQ, and GMPN…TGAE. Over residues 23–34 the composition is skewed to basic and acidic residues; sequence TEHDFRFPRRPG. Positions 45-56 are enriched in low complexity; the sequence is AAMSSSSANNNH. 3 consecutive repeat copies span residues 49 to 55, 87 to 92, and 105 to 110. Residues 49-110 form a 3 X approximate repeats region; sequence SSSANNNHNQ…INHQSSSNNN (62 aa). Over residues 100-114 the composition is skewed to low complexity; it reads NINHQSSSNNNISKN. The segment covering 652-661 has biased composition (polar residues); sequence PRSQSQSFRQ. A compositionally biased stretch (low complexity) spans 703 to 714; sequence SSGLSSVPASRP. Positions 723-736 are enriched in polar residues; that stretch reads QGSTTNLQGAAGNS. The GATA-type zinc finger occupies 743-767; it reads CTNCFTQTTPLWRRNPDGQPLCNAC. Over residues 802-827 the composition is skewed to polar residues; the sequence is GTSTRSKKNASMSAAARKNSTLSITS. 2 stretches are compositionally biased toward low complexity: residues 828 to 861 and 868 to 899; these read NANN…ASGP and AGST…SAPP. Polar residues predominate over residues 927 to 961; that stretch reads SAGSDQPVSAGAVSSSGMDVDSPANSTGSNETMPT. Over residues 1000–1023 the composition is skewed to low complexity; sequence GMPNGQAGQMMGASSSSGPGSGPS.

As to quaternary structure, interacts with nmr.

The protein localises to the nucleus. Its function is as follows. Major nitrogen regulatory protein. During conditions of nitrogen limitation it turns on the expression of genes for enzymes which are required for the use of a variety of secondary nitrogen sources, including nitrates, purines, amino acids, and proteins. The protein is Nitrogen catabolic enzyme regulatory protein (nit-2) of Neurospora crassa (strain ATCC 24698 / 74-OR23-1A / CBS 708.71 / DSM 1257 / FGSC 987).